The sequence spans 382 residues: UDP-N-acetylglucosamine--N-acetylmuramyl-(pentapeptide) pyrophosphoryl-undecaprenol N-acetylglucosamine transferase (382 aa).

Residues 11–13 (TGG), asparagine 117, arginine 160, serine 209, and glutamine 311 each bind UDP-N-acetyl-alpha-D-glucosamine.

This sequence belongs to the glycosyltransferase 28 family. MurG subfamily.

It localises to the cell inner membrane. The enzyme catalyses di-trans,octa-cis-undecaprenyl diphospho-N-acetyl-alpha-D-muramoyl-L-alanyl-D-glutamyl-meso-2,6-diaminopimeloyl-D-alanyl-D-alanine + UDP-N-acetyl-alpha-D-glucosamine = di-trans,octa-cis-undecaprenyl diphospho-[N-acetyl-alpha-D-glucosaminyl-(1-&gt;4)]-N-acetyl-alpha-D-muramoyl-L-alanyl-D-glutamyl-meso-2,6-diaminopimeloyl-D-alanyl-D-alanine + UDP + H(+). Its pathway is cell wall biogenesis; peptidoglycan biosynthesis. Its function is as follows. Cell wall formation. Catalyzes the transfer of a GlcNAc subunit on undecaprenyl-pyrophosphoryl-MurNAc-pentapeptide (lipid intermediate I) to form undecaprenyl-pyrophosphoryl-MurNAc-(pentapeptide)GlcNAc (lipid intermediate II). In Rickettsia akari (strain Hartford), this protein is UDP-N-acetylglucosamine--N-acetylmuramyl-(pentapeptide) pyrophosphoryl-undecaprenol N-acetylglucosamine transferase.